Reading from the N-terminus, the 131-residue chain is Large ribosomal subunit protein bL17 (131 aa).

This sequence belongs to the bacterial ribosomal protein bL17 family. Part of the 50S ribosomal subunit. Contacts protein L32.

This is Large ribosomal subunit protein bL17 from Shewanella oneidensis (strain ATCC 700550 / JCM 31522 / CIP 106686 / LMG 19005 / NCIMB 14063 / MR-1).